The primary structure comprises 669 residues: MSKVFKLHSEFKPGGDQPTAIASLCEGLEDGLAHQTLLGVTGSGKTFTIANVIANLNRPTMVLAPNKTLAAQLYSEMKEFFPENAVEYFVSYYDYYQPEAYVPSSDTFIEKDASVNEHIEQMRLSATKALLERKDVIVVSSVSAIYGLGDPDSYLKMMLHLSNGMIIDQRAILRRLADLQYTRNDQAFQRGTFRVRGEVIDIFPAESDDYALRVELFDEEVERLSLFDPLTGQIHYNVPRFTVYPKTHYVTPRERILDAMEKIKQELAERRKVLLANDKLVEEQRVTQRTQFDLEMMNELGYCSGIENYSRYLSGRGPGEPPPTLFDYLPADGLLVIDESHVTIPQIGGMYKGDRSRKETLVEYGFRLPSALDNRPLRFEEFEALAPQTIYVSATPGKYELEKSGNDIVEQVVRPTGLLDPVVEVRPVATQVDDLLSEIRIRAAKNERVLVTTLTKRMAEDLTEYLEEHGERVRYLHSDIDTVERVEIIRDLRLGEFDVLVGINLLREGLDMPEVSLVAILDADKEGFLRSERSLIQTIGRAARNLEGKAILYGDKITDSMAKAIGETERRREKQQQFNLEHGIVPKGLNKKIGDILKIGQPTQGRNKKGHKAVDTHEDYPLLSTAELEKEIQRLETEMYQHAKDLEFEKAAQTRDKLQTLRAQFIANS.

Positions 26-183 (EGLEDGLAHQ…RRLADLQYTR (158 aa)) constitute a Helicase ATP-binding domain. 39-46 (GVTGSGKT) is a binding site for ATP. The short motif at 92 to 115 (YYDYYQPEAYVPSSDTFIEKDASV) is the Beta-hairpin element. The region spanning 431 to 593 (QVDDLLSEIR…IVPKGLNKKI (163 aa)) is the Helicase C-terminal domain. The UVR domain maps to 629-664 (EKEIQRLETEMYQHAKDLEFEKAAQTRDKLQTLRAQ).

This sequence belongs to the UvrB family. Forms a heterotetramer with UvrA during the search for lesions. Interacts with UvrC in an incision complex.

The protein localises to the cytoplasm. Its function is as follows. The UvrABC repair system catalyzes the recognition and processing of DNA lesions. A damage recognition complex composed of 2 UvrA and 2 UvrB subunits scans DNA for abnormalities. Upon binding of the UvrA(2)B(2) complex to a putative damaged site, the DNA wraps around one UvrB monomer. DNA wrap is dependent on ATP binding by UvrB and probably causes local melting of the DNA helix, facilitating insertion of UvrB beta-hairpin between the DNA strands. Then UvrB probes one DNA strand for the presence of a lesion. If a lesion is found the UvrA subunits dissociate and the UvrB-DNA preincision complex is formed. This complex is subsequently bound by UvrC and the second UvrB is released. If no lesion is found, the DNA wraps around the other UvrB subunit that will check the other stand for damage. This Proteus mirabilis (strain HI4320) protein is UvrABC system protein B.